A 340-amino-acid chain; its full sequence is Ubiquitin-like domain-containing CTD phosphatase (340 aa).

The region spanning 24–101 (LTLTVKWNGK…MTMIGTVEDD (78 aa)) is the Ubiquitin-like domain. The FCP1 homology domain maps to 151–312 (CRQGKKLLVL…VKLTQYLLTI (162 aa)). The phosphatase stretch occupies residues 151–312 (CRQGKKLLVL…VKLTQYLLTI (162 aa)). Mg(2+) contacts are provided by D161, D163, and D271.

Mg(2+) serves as cofactor.

It is found in the nucleus. It carries out the reaction O-phospho-L-seryl-[protein] + H2O = L-seryl-[protein] + phosphate. The enzyme catalyses O-phospho-L-threonyl-[protein] + H2O = L-threonyl-[protein] + phosphate. Dephosphorylates 26S nuclear proteasomes, thereby decreasing their proteolytic activity. The dephosphorylation may prevent assembly of the core and regulatory particles (CP and RP) into mature 26S proteasome. The polypeptide is Ubiquitin-like domain-containing CTD phosphatase (Arabidopsis thaliana (Mouse-ear cress)).